Consider the following 356-residue polypeptide: Putative mitogen-activated protein kinase 14C (356 aa).

A Protein kinase domain is found at 20-305; that stretch reads YEFVRFLGGG…AAEAMLHPYL (286 aa). Residues 26–34 and lysine 49 contribute to the ATP site; that span reads LGGGSFGQV. The Proton acceptor role is filled by aspartate 147. The residue at position 177 (threonine 177) is a Phosphothreonine.

It belongs to the protein kinase superfamily. CMGC Ser/Thr protein kinase family. MAP kinase subfamily. Requires Mg(2+) as cofactor. Post-translationally, the phosphorylation on Thr-177 activates the enzyme. A conserved Tyr, which must also be phosphorylated to activate the enzyme in closely related sequences, is replaced by His-179 in this sequence.

The enzyme catalyses L-seryl-[protein] + ATP = O-phospho-L-seryl-[protein] + ADP + H(+). It carries out the reaction L-threonyl-[protein] + ATP = O-phospho-L-threonyl-[protein] + ADP + H(+). In terms of biological role, kinase involved in a signal transduction pathway. The protein is Putative mitogen-activated protein kinase 14C (p38c) of Drosophila melanogaster (Fruit fly).